The primary structure comprises 611 residues: Protein Spindly (611 aa).

A coiled-coil region spans residues 1 to 288; sequence MEESETVLKL…QFQSLQKQHA (288 aa). Positions 499–511 are enriched in basic and acidic residues; it reads LKEDSSLSTKEQD. Residues 499–611 are disordered; the sequence is LKEDSSLSTK…PAATTQCPQQ (113 aa). Residues 549-567 are compositionally biased toward polar residues; sequence RNTNNCSVTSTSPRSASEE. The segment covering 570–583 has biased composition (basic and acidic residues); that stretch reads SESKRFDEEQEKRK.

This sequence belongs to the Spindly family.

It localises to the chromosome. It is found in the centromere. Its subcellular location is the kinetochore. Required for the localization of dynein and dynactin to the mitotic kintochore. Dynein is believed to control the initial lateral interaction between the kinetochore and spindle microtubules and to facilitate the subsequent formation of end-on kinetochore-microtubule attachments mediated by the NDC80 complex. May act as an adapter protein linking the dynein motor complex to various cargos. The polypeptide is Protein Spindly (spdl1) (Xenopus tropicalis (Western clawed frog)).